Reading from the N-terminus, the 101-residue chain is MSDQEAKPSTEDLGDKKEGEYIKLKVIGQDSSEIHFKVKMTTHLKKLKESYCQRQGVPMNSLRFLFEGQRIADNHTPKELGMEEEDVIEVYQEQTGGHSNV.

An N-acetylserine modification is found at Ser-2. Ser-2 is subject to Phosphoserine. Lys-7 is covalently cross-linked (Glycyl lysine isopeptide (Lys-Gly) (interchain with G-Cter in SUMO1); alternate). Lys-7 is covalently cross-linked (Glycyl lysine isopeptide (Lys-Gly) (interchain with G-Cter in SUMO2); alternate). Ser-9 carries the phosphoserine modification. Glycyl lysine isopeptide (Lys-Gly) (interchain with G-Cter in SUMO2) cross-links involve residues Lys-16, Lys-17, and Lys-23. A Ubiquitin-like domain is found at 20–97; sequence EYIKLKVIGQ…IEVYQEQTGG (78 aa). Lys-25 participates in a covalent cross-link: Glycyl lysine isopeptide (Lys-Gly) (interchain with G-Cter in SUMO1). Position 32 is a phosphoserine (Ser-32). Glycyl lysine isopeptide (Lys-Gly) (interchain with G-Cter in SUMO2) cross-links involve residues Lys-37, Lys-39, Lys-45, and Lys-46. A Glycyl lysine isopeptide (Gly-Lys) (interchain with K-? in acceptor proteins) cross-link involves residue Gly-97. The propeptide occupies 98–101; the sequence is HSNV.

The protein belongs to the ubiquitin family. SUMO subfamily. In terms of assembly, covalently attached to KCNB1; UBE2I increases cross-linking with KCNB1 and PIAS1 decreases cross-links with KCNB1. Interacts with SAE2, RANBP2, PIAS1 and PIAS2. Interacts with PRKN. Covalently attached to a number of proteins such as IKFZ1, PML, RANGAP1, HIPK2, SP100, p53, p73-alpha, MDM2, JUN, DNMT3B and TDG. Also interacts with HIF1A, HIPK2, HIPK3, CHD3, EXOSC9, RAD51 and RAD52. Interacts with USP25 (via ts SIM domain); the interaction weakly sumoylates USP25. Interacts with SIMC1, CASP8AP2, RNF111 and SOBP (via SIM domains). Interacts with BHLHE40/DEC1. Interacts with RWDD3. Interacts with UBE2I/UBC9 and this interaction is enhanced in the presence of RWDD3. Interacts with MTA1. Interacts with SENP2. Interacts with HINT1. Post-translationally, cleavage of precursor form by SENP1 or SENP2 is necessary for function. Polymeric SUMO1 chains undergo polyubiquitination by RNF4.

It is found in the nucleus membrane. It localises to the nucleus speckle. The protein resides in the cytoplasm. The protein localises to the nucleus. Its subcellular location is the PML body. It is found in the cell membrane. Its function is as follows. Ubiquitin-like protein that can be covalently attached to proteins as a monomer or a lysine-linked polymer. Covalent attachment via an isopeptide bond to its substrates requires prior activation by the E1 complex SAE1-SAE2 and linkage to the E2 enzyme UBE2I, and can be promoted by E3 ligases such as PIAS1-4, RANBP2 or CBX4. This post-translational modification on lysine residues of proteins plays a crucial role in a number of cellular processes such as nuclear transport, DNA replication and repair, mitosis and signal transduction. Involved for instance in targeting RANGAP1 to the nuclear pore complex protein RANBP2. Covalently attached to the voltage-gated potassium channel KCNB1; this modulates the gating characteristics of KCNB1. Polymeric SUMO1 chains are also susceptible to polyubiquitination which functions as a signal for proteasomal degradation of modified proteins. May be involved in modified proteins. May also regulate a network of genes involved in palate development. Covalently attached to ZFHX3. The protein is Small ubiquitin-related modifier 1 (SUMO1) of Ictidomys tridecemlineatus (Thirteen-lined ground squirrel).